Consider the following 373-residue polypeptide: Cobalt-precorrin-5B C(1)-methyltransferase (373 aa).

It belongs to the CbiD family.

The catalysed reaction is Co-precorrin-5B + S-adenosyl-L-methionine = Co-precorrin-6A + S-adenosyl-L-homocysteine. It participates in cofactor biosynthesis; adenosylcobalamin biosynthesis; cob(II)yrinate a,c-diamide from sirohydrochlorin (anaerobic route): step 6/10. In terms of biological role, catalyzes the methylation of C-1 in cobalt-precorrin-5B to form cobalt-precorrin-6A. This chain is Cobalt-precorrin-5B C(1)-methyltransferase, found in Halorhodospira halophila (strain DSM 244 / SL1) (Ectothiorhodospira halophila (strain DSM 244 / SL1)).